Here is a 395-residue protein sequence, read N- to C-terminus: Subtilisin-like protease 9 (395 aa).

Residues 1 to 20 (MGFFRTLFSFSIFALSLADT) form the signal peptide. Positions 21 to 120 (SKFIGLDDVD…ADRVVKMAAL (100 aa)) are excised as a propeptide. Residues 36-117 (SYIVVMKGAV…YVEADRVVKM (82 aa)) form the Inhibitor I9 domain. One can recognise a Peptidase S8 domain in the interval 128-395 (SWGLGRISHK…RRLLYNGSGA (268 aa)). Residues Asp-160 and His-191 each act as charge relay system in the active site. Asn-252 carries an N-linked (GlcNAc...) asparagine glycan. Ser-341 functions as the Charge relay system in the catalytic mechanism. Asn-391 is a glycosylation site (N-linked (GlcNAc...) asparagine).

Belongs to the peptidase S8 family.

It is found in the secreted. In terms of biological role, secreted subtilisin-like serine protease with keratinolytic activity that contributes to pathogenicity. In Arthroderma otae (strain ATCC MYA-4605 / CBS 113480) (Microsporum canis), this protein is Subtilisin-like protease 9 (SUB9).